The chain runs to 382 residues: Galactokinase (382 aa).

A substrate-binding site is contributed by 34 to 37; the sequence is EHTD. 124 to 130 lines the ATP pocket; sequence GAGLSSS. Mg(2+) is bound by residues S130 and E162. D174 serves as the catalytic Proton acceptor. Y223 is a substrate binding site.

The protein belongs to the GHMP kinase family. GalK subfamily.

The protein localises to the cytoplasm. The enzyme catalyses alpha-D-galactose + ATP = alpha-D-galactose 1-phosphate + ADP + H(+). Its pathway is carbohydrate metabolism; galactose metabolism. Its function is as follows. Catalyzes the transfer of the gamma-phosphate of ATP to D-galactose to form alpha-D-galactose-1-phosphate (Gal-1-P). This chain is Galactokinase, found in Escherichia coli (strain SMS-3-5 / SECEC).